The primary structure comprises 149 residues: HMG1/2-like protein (149 aa).

2 stretches are compositionally biased toward basic and acidic residues: residues 1–15 (MKGG…KAET) and 35–44 (KGKEPKDPNK). Disordered regions lie at residues 1-52 (MKGG…PSAF) and 112-149 (AYNK…EDDD). A DNA-binding region (HMG box) is located at residues 45–114 (PKRPPSAFFV…EYEITLQAYN (70 aa)). Over residues 134–149 (NDEDEDEEDEEDEDDD) the composition is skewed to acidic residues.

Belongs to the HMGB family.

It localises to the nucleus. The sequence is that of HMG1/2-like protein from Vicia faba (Broad bean).